Here is an 855-residue protein sequence, read N- to C-terminus: Pentatricopeptide repeat-containing protein At1g74750 (855 aa).

Positions Gly-21–Gly-40 are disordered. PPR repeat units lie at residues Asp-358–Pro-392, Asn-393–Pro-427, Asp-428–Pro-462, Asp-463–Pro-497, Asn-498–Pro-532, Asp-533–Pro-567, Asp-568–Pro-602, and Asn-603–Pro-637. The Smr domain occupies Ile-755–Glu-838.

It belongs to the PPR family. P subfamily.

This chain is Pentatricopeptide repeat-containing protein At1g74750, found in Arabidopsis thaliana (Mouse-ear cress).